Reading from the N-terminus, the 594-residue chain is Parathyroid hormone/parathyroid hormone-related peptide receptor (594 aa).

Positions 1–28 (MGTARIAPGLALLLCCPVLSSAYALVDA) are cleaved as a signal peptide. Over 29–188 (DDVMTKEEQI…TREREVFDRL (160 aa)) the chain is Extracellular. Intrachain disulfides connect C48-C117, C108-C149, and C132-C171. The disordered stretch occupies residues 66 to 102 (DKGWTSASTSGKPRKDKASGKLYPESEEDKEAPTDSR). Residues N152, N162, N167, and N177 are each glycosylated (N-linked (GlcNAc...) asparagine). Residues 189–209 (GMIYTVGYSMSLASLTVAVLI) traverse the membrane as a helical segment. Over 210–223 (LAYFRRLHCTRNYI) the chain is Cytoplasmic. The chain crosses the membrane as a helical span at residues 224 to 244 (HMHLFLSFMLRAVSIFVKDAV). Over 245 to 295 (LYSGATLDEAERLTEEELRAIAQAPPPPATAAAGYAGCRVAVTFFLYFLAT) the chain is Extracellular. A helical membrane pass occupies residues 296 to 316 (NYYWILVEGLYLHSLIFMAFF). Residues 317 to 319 (SEK) lie on the Cytoplasmic side of the membrane. Residues 320–340 (KYLWGFTVFGWGLPAVFVAVW) traverse the membrane as a helical segment. Topologically, residues 341–361 (VSVRATLANTGCWDLSSGNKK) are extracellular. A helical membrane pass occupies residues 362–382 (WIIQVPILASIVLHFILFINI). The Cytoplasmic portion of the chain corresponds to 383-405 (VRVLATKLRETNAGRCDTRQQYR). A helical membrane pass occupies residues 406–426 (KLLKSTLVLMPLFGVHYIVFM). Over 427-440 (ATPYTEVSGTLWQV) the chain is Extracellular. The helical transmembrane segment at 441–461 (QMHYEMLFNSFQGFFVAIIYC) threads the bilayer. Topologically, residues 462 to 594 (FCNGEVQAEI…LLQEEWETVM (133 aa)) are cytoplasmic. An Important for interaction with G proteins motif is present at residues 475–478 (WSRW). Residues 525-594 (PTATTNGHPQ…LLQEEWETVM (70 aa)) form a disordered region. The span at 543 to 558 (TPALETLETTPPATAA) shows a compositional bias: low complexity. T552 carries the phosphothreonine modification.

Belongs to the G-protein coupled receptor 2 family. Homodimer in the absence of bound ligand. Peptide hormone binding leads to dissociation of the homodimer. In terms of processing, N-glycosylated.

It is found in the cell membrane. G-protein-coupled receptor for parathyroid hormone (PTH) and for parathyroid hormone-related peptide (PTHLH). Ligand binding causes a conformation change that triggers signaling via guanine nucleotide-binding proteins (G proteins) and modulates the activity of downstream effectors, such as adenylate cyclase (cAMP). PTH1R is coupled to G(s) G alpha proteins and mediates activation of adenylate cyclase activity. PTHLH dissociates from PTH1R more rapidly than PTH; as consequence, the cAMP response induced by PTHLH decays faster than the response induced by PTH. The polypeptide is Parathyroid hormone/parathyroid hormone-related peptide receptor (PTH1R) (Pongo abelii (Sumatran orangutan)).